The following is a 355-amino-acid chain: Protein RecA (355 aa).

67–74 contacts ATP; that stretch reads GPESSGKT.

It belongs to the RecA family.

Its subcellular location is the cytoplasm. Its function is as follows. Can catalyze the hydrolysis of ATP in the presence of single-stranded DNA, the ATP-dependent uptake of single-stranded DNA by duplex DNA, and the ATP-dependent hybridization of homologous single-stranded DNAs. It interacts with LexA causing its activation and leading to its autocatalytic cleavage. This Histophilus somni (strain 2336) (Haemophilus somnus) protein is Protein RecA.